The chain runs to 147 residues: Hemoglobin subunit beta (147 aa).

The region spanning 3–147 is the Globin domain; that stretch reads HWSCEEKQFI…VAHALALGYH (145 aa). Residues His-64 and His-93 each coordinate heme b.

The protein belongs to the globin family. Heterotetramer of two alpha-D chains and two beta chains. In terms of tissue distribution, red blood cells.

Functionally, involved in oxygen transport from the lung to the various peripheral tissues. This chain is Hemoglobin subunit beta (HBB), found in Chelonoidis carbonarius (Red-footed tortoise).